Reading from the N-terminus, the 157-residue chain is MATTIDARALAAPLVEALLTTAAEQIRAAAPRIAGLSASEAAAVLPADLLPQVRNFLLTMAKEGLTGELNAVAAALPGYLETGSRAVDASVTSAIELSAEQKERITRELQQRYGDVHVTYHVDPTLIGGLIIRVGDQVLDNSLRARLSAIQRVLQAS.

This sequence belongs to the ATPase delta chain family. In terms of assembly, F-type ATPases have 2 components, F(1) - the catalytic core - and F(0) - the membrane proton channel. F(1) has five subunits: alpha(3), beta(3), gamma(1), delta(1), epsilon(1). F(0) has three main subunits: a(1), b(2) and c(10-14). The alpha and beta chains form an alternating ring which encloses part of the gamma chain. F(1) is attached to F(0) by a central stalk formed by the gamma and epsilon chains, while a peripheral stalk is formed by the delta and b chains.

The protein localises to the cell membrane. F(1)F(0) ATP synthase produces ATP from ADP in the presence of a proton or sodium gradient. F-type ATPases consist of two structural domains, F(1) containing the extramembraneous catalytic core and F(0) containing the membrane proton channel, linked together by a central stalk and a peripheral stalk. During catalysis, ATP synthesis in the catalytic domain of F(1) is coupled via a rotary mechanism of the central stalk subunits to proton translocation. In terms of biological role, this protein is part of the stalk that links CF(0) to CF(1). It either transmits conformational changes from CF(0) to CF(1) or is implicated in proton conduction. In Chloroflexus aurantiacus (strain ATCC 29364 / DSM 637 / Y-400-fl), this protein is ATP synthase subunit delta.